We begin with the raw amino-acid sequence, 548 residues long: Organic cation transporter protein (548 aa).

Over 1-22 the chain is Cytoplasmic; that stretch reads MGYDDVITHLGEFGPYQKRIYY. Residues 23–43 traverse the membrane as a helical segment; it reads LLCLPAIVCAFHKLAGVFLLA. Over 44-127 the chain is Extracellular; sequence KPDFRCALPY…TEWNLVCSRS (84 aa). N-linked (GlcNAc...) asparagine glycans are attached at residues N55, N67, N89, and N97. The helical transmembrane segment at 128–148 threads the bilayer; that stretch reads LLSATSDSLFMLGVLLGSLIF. Residues 149–158 lie on the Cytoplasmic side of the membrane; sequence GQMSDKLGRK. The helical transmembrane segment at 159–179 threads the bilayer; that stretch reads PTFFASLVLQLIFGVLAAVAP. The Extracellular segment spans residues 180–189; that stretch reads EYFSYTISRM. The helical transmembrane segment at 190-210 threads the bilayer; sequence IVGATTSGVFLVAYVIALEMV. Topologically, residues 211–219 are cytoplasmic; sequence GSSYRLFAG. Residues 220-240 traverse the membrane as a helical segment; that stretch reads VAMQMFFSVGFMLTAGFAYFI. Residues 241 to 244 lie on the Extracellular side of the membrane; it reads HDWR. Residues 245 to 265 traverse the membrane as a helical segment; the sequence is WLQIAITLPGLLFLCYYWIIP. At 266 to 337 the chain is on the cytoplasmic side; it reads ESARWLLMKG…LLRYPNLRRK (72 aa). The helical transmembrane segment at 338–358 threads the bilayer; sequence TLLIFFDWFVNSGVYYGLSWN. Residues 359–366 lie on the Extracellular side of the membrane; the sequence is TNNLGGNQ. Residues 367–387 traverse the membrane as a helical segment; that stretch reads LVNFMISGAVEIPGYTLLLFT. The Cytoplasmic segment spans residues 388–395; that stretch reads LNRWGRRS. The helical transmembrane segment at 396–416 threads the bilayer; it reads ILCGTMMVAGISLLATIFVPS. Topologically, residues 417 to 419 are extracellular; that stretch reads DMN. A helical transmembrane segment spans residues 420 to 440; it reads WLIVACAMIGKLAITSSYGTI. Residues 441 to 453 are Cytoplasmic-facing; sequence YIFSAEQFPTVVR. Residues 454 to 474 form a helical membrane-spanning segment; the sequence is NVGLGASSMVARVGGILAPYL. Topologically, residues 475 to 482 are extracellular; sequence KLLGEIWR. Residues 483–503 form a helical membrane-spanning segment; the sequence is PLPLIICGALSLTAGLLSLLL. The Cytoplasmic segment spans residues 504–548; that stretch reads PETLNKPMPETIEDGENFGKKPAPQETAEEGGTQELSGMLNGKSG. Residues 512–548 form a disordered region; it reads PETIEDGENFGKKPAPQETAEEGGTQELSGMLNGKSG.

It belongs to the major facilitator (TC 2.A.1) superfamily. Organic cation transporter (TC 2.A.1.19) family. Expressed in embryos and adults at low level. Expressed at higher level in third instar larvae.

Its subcellular location is the membrane. Its function is as follows. Probably transports organic cations. This chain is Organic cation transporter protein (Orct), found in Drosophila melanogaster (Fruit fly).